Reading from the N-terminus, the 415-residue chain is Esterase FrsA (415 aa).

Belongs to the FrsA family.

The catalysed reaction is a carboxylic ester + H2O = an alcohol + a carboxylate + H(+). In terms of biological role, catalyzes the hydrolysis of esters. The chain is Esterase FrsA from Yersinia pseudotuberculosis serotype O:1b (strain IP 31758).